A 414-amino-acid chain; its full sequence is Esterase FrsA (414 aa).

Belongs to the FrsA family.

It catalyses the reaction a carboxylic ester + H2O = an alcohol + a carboxylate + H(+). Its function is as follows. Catalyzes the hydrolysis of esters. The sequence is that of Esterase FrsA from Escherichia coli O8 (strain IAI1).